A 445-amino-acid polypeptide reads, in one-letter code: MHGHNRNGQAHVPRRKRRNRFVKKNGQCNVYFANLSNKSQRYMADIFTTCVDTRWRYMLMIFSAAFLVSWLFFGLLFWWIAFFHGDLEASPSVPAVGGPGGNGGESPNAPKPCIMHVNGFLGAFLFSVETQTTIGYGFRCVTEECPLAVIAVVVQSIVGCVIDSFMIGTIMAKMARPKKRAQTLLFSHHAVISVRDGKLCLMWRVGNLRKSHIVEAHVRAQLIKPYMTQEGEYLPLDQRDLNVGYDIGLDRIFLVSPIIIVHEIDEDSPLYGMGKEELESEDFEIVVILEGMVEATAMTTQARSSYLASEILWGHRFEPVVFEEKSHYKVDYSRFHKTYEVAGTPCCSARELQESKITVLPAPPPPPSAFCYENELALMSQEEEEMEEEAAAAAAVAAGLGLEAGSKEEAGIIRMLEFGSHLDLERMQAATLPLDNISYRRESRI.

Topologically, residues 1–55 (MHGHNRNGQAHVPRRKRRNRFVKKNGQCNVYFANLSNKSQRYMADIFTTCVDTRW) are cytoplasmic. A helical membrane pass occupies residues 56–80 (RYMLMIFSAAFLVSWLFFGLLFWWI). Topologically, residues 81–119 (AFFHGDLEASPSVPAVGGPGGNGGESPNAPKPCIMHVNG) are extracellular. Positions 120-131 (FLGAFLFSVETQ) form an intramembrane region, helical; Pore-forming. Positions 132–138 (TTIGYGF) form an intramembrane region, pore-forming. Residues 133–138 (TIGYGF) carry the Selectivity filter motif. The Extracellular segment spans residues 139 to 147 (RCVTEECPL). Residues 148–169 (AVIAVVVQSIVGCVIDSFMIGT) form a helical membrane-spanning segment. Over 170–445 (IMAKMARPKK…NISYRRESRI (276 aa)) the chain is Cytoplasmic. The PDZ-binding signature appears at 443 to 445 (SRI).

The protein belongs to the inward rectifier-type potassium channel (TC 1.A.2.1) family. KCNJ4 subfamily. Homomultimeric and heteromultimeric association with KCNJ2 and KCNJ12. Interacts with DLG2 and DLG4. Associates, via its PDZ-recognition domain, with a complex containing LIN7A, LIN7B, LIN7C, DLG1, CASK and APBA1. Interacts with TAX1BP3. TAX1BP3 competes with LIN7 family members for KCNJ4 binding. In terms of tissue distribution, highly expressed in the forebrain, moderately in skeletal muscle. Im olfactory bulb, specifically expressed at the postsynaptic membrane of dendritic spines of granule cells.

It localises to the cell membrane. It is found in the postsynaptic cell membrane. Its subcellular location is the cytoplasmic vesicle membrane. The catalysed reaction is K(+)(in) = K(+)(out). Inward rectifier potassium channels are characterized by a greater tendency to allow potassium to flow into the cell rather than out of it. Their voltage dependence is regulated by the concentration of extracellular potassium; as external potassium is raised, the voltage range of the channel opening shifts to more positive voltages. The inward rectification is mainly due to the blockage of outward current by internal magnesium. Can be blocked by extracellular barium and cesium. This is Inward rectifier potassium channel 4 (Kcnj4) from Mus musculus (Mouse).